Consider the following 164-residue polypeptide: R-phycoerythrin alpha chain (164 aa).

(2R,3E)-phycoerythrobilin-binding residues include Cys-82 and Cys-139.

This sequence belongs to the phycobiliprotein family. Heterodimer of an alpha and a beta chain. In terms of processing, contains two covalently linked bilin chromophores.

The protein localises to the plastid. It is found in the chloroplast thylakoid membrane. Its function is as follows. Light-harvesting photosynthetic bile pigment-protein from the phycobiliprotein complex. In Lophosiphonia boldii (Red alga), this protein is R-phycoerythrin alpha chain (cpeA).